The sequence spans 184 residues: Oligoribonuclease (184 aa).

The region spanning 7-170 (LIWIDLEMTG…DDIRESVAEL (164 aa)) is the Exonuclease domain. Residue Tyr-128 is part of the active site.

Belongs to the oligoribonuclease family.

Its subcellular location is the cytoplasm. Its function is as follows. 3'-to-5' exoribonuclease specific for small oligoribonucleotides. The protein is Oligoribonuclease of Baumannia cicadellinicola subsp. Homalodisca coagulata.